Here is a 589-residue protein sequence, read N- to C-terminus: Probable galacturonosyltransferase 6 (589 aa).

Topologically, residues 1–6 are cytoplasmic; that stretch reads MKQIRR. Residues 7–27 form a helical; Signal-anchor for type II membrane protein membrane-spanning segment; it reads WQRILILALLSISVFAPLIFV. Residues 28–589 lie on the Lumenal side of the membrane; sequence SNRLKSITPV…TYLQQCNLQA (562 aa). 2 N-linked (GlcNAc...) asparagine glycosylation sites follow: Asn83 and Asn126. A disordered region spans residues 127-151; that stretch reads KTDFKPPLSKGEKNTRVQPDRATDV. The segment covering 136-151 has biased composition (basic and acidic residues); it reads KGEKNTRVQPDRATDV. 2 N-linked (GlcNAc...) asparagine glycosylation sites follow: Asn317 and Asn454.

It belongs to the glycosyltransferase 8 family. As to expression, expressed in roots, inflorescences, siliques, leaves and stems.

The protein resides in the golgi apparatus membrane. It functions in the pathway glycan metabolism; pectin biosynthesis. Its function is as follows. Probably involved in pectin biosynthesis in cell walls. The polypeptide is Probable galacturonosyltransferase 6 (GAUT6) (Arabidopsis thaliana (Mouse-ear cress)).